Consider the following 345-residue polypeptide: Biotin synthase (345 aa).

A Radical SAM core domain is found at 38 to 256 (RQVQVSTLLS…IAVARIMMPS (219 aa)). [4Fe-4S] cluster contacts are provided by C53, C57, and C60. [2Fe-2S] cluster-binding residues include C97, C128, C188, and R260.

This sequence belongs to the radical SAM superfamily. Biotin synthase family. Homodimer. Requires [4Fe-4S] cluster as cofactor. It depends on [2Fe-2S] cluster as a cofactor.

It catalyses the reaction (4R,5S)-dethiobiotin + (sulfur carrier)-SH + 2 reduced [2Fe-2S]-[ferredoxin] + 2 S-adenosyl-L-methionine = (sulfur carrier)-H + biotin + 2 5'-deoxyadenosine + 2 L-methionine + 2 oxidized [2Fe-2S]-[ferredoxin]. It functions in the pathway cofactor biosynthesis; biotin biosynthesis; biotin from 7,8-diaminononanoate: step 2/2. Catalyzes the conversion of dethiobiotin (DTB) to biotin by the insertion of a sulfur atom into dethiobiotin via a radical-based mechanism. The chain is Biotin synthase from Yersinia pestis bv. Antiqua (strain Antiqua).